A 521-amino-acid polypeptide reads, in one-letter code: Amidase (521 aa).

Catalysis depends on charge relay system residues K96 and S171. Positions 155–174 (SGPVRNPWDRQREAGGSSGG) are disordered. Catalysis depends on S195, which acts as the Acyl-ester intermediate.

Belongs to the amidase family. Homodimer.

It carries out the reaction a monocarboxylic acid amide + H2O = a monocarboxylate + NH4(+). Hydrolyzes propionamides efficiently, and also at a lower efficiency, acetamide, acrylamide and indoleacetamide. This enzyme seems to be stereospecific and can lead to the production of a single enantiomer. In Rhodococcus erythropolis (Arthrobacter picolinophilus), this protein is Amidase (amdA).